We begin with the raw amino-acid sequence, 145 residues long: D-aminoacyl-tRNA deacylase (145 aa).

The Gly-cisPro motif, important for rejection of L-amino acids motif lies at 137–138; sequence GP.

The protein belongs to the DTD family. In terms of assembly, homodimer.

The protein localises to the cytoplasm. The catalysed reaction is glycyl-tRNA(Ala) + H2O = tRNA(Ala) + glycine + H(+). It catalyses the reaction a D-aminoacyl-tRNA + H2O = a tRNA + a D-alpha-amino acid + H(+). In terms of biological role, an aminoacyl-tRNA editing enzyme that deacylates mischarged D-aminoacyl-tRNAs. Also deacylates mischarged glycyl-tRNA(Ala), protecting cells against glycine mischarging by AlaRS. Acts via tRNA-based rather than protein-based catalysis; rejects L-amino acids rather than detecting D-amino acids in the active site. By recycling D-aminoacyl-tRNA to D-amino acids and free tRNA molecules, this enzyme counteracts the toxicity associated with the formation of D-aminoacyl-tRNA entities in vivo and helps enforce protein L-homochirality. This chain is D-aminoacyl-tRNA deacylase, found in Escherichia coli O139:H28 (strain E24377A / ETEC).